Reading from the N-terminus, the 481-residue chain is MDFLLPDFTPAYPEIFLLLMVCVVMLADLFAGERNRYLAFYLSLLTLAGCALVTCGIYSTEVRYTFTGMFVGDAMSDILKLLIYVTVAAVLIYSRSYISTRGLLKGEFFSLALFATLGMMVMVSANHLITLYLGLELLSLSLYAMVALQRESAIATEAAIKFFVLGALASGFLLYGMSMLYGATGTLHLPELAKVIHSGQADHEIFIIGLVFVVAGIGFKLSAVPFHMWAPDIYEGAPTAVTLFIGSAPKFAAFGFVMRLLVGGLGDLVTDWQGMLVLLAVASMAVGNIAAIAQQNIKRMLAYSTISHMGFVLLGFIAAGENGYSSSMFYVIAYVLMTLGAFGIIMLVSREGFEADKISDLKGLNQRNPWLAFMMLLVMFSMAGIPPMIGFYAKLSVLQAVLEAGYIWLVVVAVMLSLIGAFYYLRIIKFMYFDAPEQTQPIMFKPDVKVLVSINGLAIILLGMFPQMLMGLSLSAIQHSM.

Helical transmembrane passes span 11-31, 37-57, 74-94, 103-123, 128-148, 162-182, 205-225, 238-258, 272-292, 300-320, 328-348, 371-391, 405-425, and 457-477; these read AYPE…DLFA, YLAF…TCGI, AMSD…LIYS, LLKG…MVMV, LITL…MVAL, FFVL…MLYG, IFII…SAVP, PTAV…GFVM, WQGM…IAAI, MLAY…IAAG, MFYV…IMLV, LAFM…MIGF, GYIW…FYYL, and LAII…LSAI.

Belongs to the complex I subunit 2 family. As to quaternary structure, NDH-1 is composed of 14 different subunits. Subunits NuoA, H, J, K, L, M, N constitute the membrane sector of the complex.

The protein localises to the cell inner membrane. The catalysed reaction is a quinone + NADH + 5 H(+)(in) = a quinol + NAD(+) + 4 H(+)(out). Functionally, NDH-1 shuttles electrons from NADH, via FMN and iron-sulfur (Fe-S) centers, to quinones in the respiratory chain. The immediate electron acceptor for the enzyme in this species is believed to be ubiquinone. Couples the redox reaction to proton translocation (for every two electrons transferred, four hydrogen ions are translocated across the cytoplasmic membrane), and thus conserves the redox energy in a proton gradient. This Nitrosomonas europaea (strain ATCC 19718 / CIP 103999 / KCTC 2705 / NBRC 14298) protein is NADH-quinone oxidoreductase subunit N.